The primary structure comprises 214 residues: Zinc finger protein 11 (214 aa).

Positions 1 to 27 are disordered; it reads MKRTHLASFSNRDKTQEEEGEDGNGDN. Residues 49–71 form a C2H2-type zinc finger; the sequence is YTCSFCRREFRSAQALGGHMNVH. A Nuclear localization signal motif is present at residues 72–79; the sequence is RRDRAKLR. The disordered stretch occupies residues 89 to 130; sequence HHHTPIANPNPNFSSSSSSSTTTAHLEPSLTNQRSKTTPFPS. Residues 102–111 show a composition bias toward low complexity; that stretch reads SSSSSSSTTT. The segment covering 117 to 128 has biased composition (polar residues); that stretch reads SLTNQRSKTTPF.

As to expression, expressed in roots, stems, axillary buds and flowers.

It is found in the nucleus. Functionally, probable transcription factor that may regulate cell division and growth. This is Zinc finger protein 11 from Arabidopsis thaliana (Mouse-ear cress).